The chain runs to 489 residues: MVRLPYVTALTTLFSYGLLFAFGQLRDFFRRILDAGKSSNLKGYAPICLGLEDFYTRRLYLRIQDCFGRPIASAPDAWFDVVERYSNDSNKTLHRTTKTSKCLNLGSYNYLGFAAADEYCTPRVIESLKKYSASTCSVRVDGGNTKLHVELEELVARFVGKPAAILFGMGYVTNSAIIPALVGKGGLIISDSLNHNSIVNGARGSGATVRVFQHNNPAHLEEVLREQIAGGQPRTHRPWKKIIVIVEGIYSMEGELCKLPEVIAVCKKYKAYTYLDEAHSIGAVGKTGRGVCELLGVDPADVDIMMGTFTKSFGSCGGYIAASKEIIDHLKHICPAHIYATSMSPPAVQQVISAIKVILGEDGSNRGAKKLAQIRENSNFFRSELQKMGFEVLGDNDSPVMPIMLYNPAKIPAFSRECLRQHVAVVTVAFPATPLLLARARICISASHSREDLIKGLEVISKVGDLVGIKYFPVEHEKTASVEKLKKLQ.

Residues 4–24 form a helical membrane-spanning segment; sequence LPYVTALTTLFSYGLLFAFGQ. N6-(pyridoxal phosphate)lysine is present on Lys-311.

The protein belongs to the class-II pyridoxal-phosphate-dependent aminotransferase family. In terms of assembly, heterodimer with LCB1. Component of the serine palmitoyltransferase (SPT) complex, composed of LCB1 and LCB2. Pyridoxal 5'-phosphate is required as a cofactor.

It is found in the endoplasmic reticulum membrane. The enzyme catalyses L-serine + hexadecanoyl-CoA + H(+) = 3-oxosphinganine + CO2 + CoA. It participates in lipid metabolism; sphingolipid metabolism. Serine palmitoyltransferase (SPT). The heterodimer formed with LCB1 constitutes the catalytic core. The chain is Long chain base biosynthesis protein 2d from Oryza sativa subsp. japonica (Rice).